A 180-amino-acid chain; its full sequence is Large ribosomal subunit protein uL5 (180 aa).

Belongs to the universal ribosomal protein uL5 family. Part of the 50S ribosomal subunit; part of the 5S rRNA/L5/L18/L25 subcomplex. Contacts the 5S rRNA and the P site tRNA. Forms a bridge to the 30S subunit in the 70S ribosome.

Its function is as follows. This is one of the proteins that bind and probably mediate the attachment of the 5S RNA into the large ribosomal subunit, where it forms part of the central protuberance. In the 70S ribosome it contacts protein S13 of the 30S subunit (bridge B1b), connecting the 2 subunits; this bridge is implicated in subunit movement. Contacts the P site tRNA; the 5S rRNA and some of its associated proteins might help stabilize positioning of ribosome-bound tRNAs. The protein is Large ribosomal subunit protein uL5 of Synechococcus sp. (strain JA-2-3B'a(2-13)) (Cyanobacteria bacterium Yellowstone B-Prime).